We begin with the raw amino-acid sequence, 1755 residues long: Transposon Ty1-GR2 Gag-Pol polyprotein (1755 aa).

Positions 1-16 (MESQQLSQHSHISHGS) are enriched in low complexity. Disordered stretches follow at residues 1–93 (MESQ…MMTQ), 126–173 (PQSQ…RPPP), and 352–421 (GSRN…SKST). Polar residues-rich tracts occupy residues 48–60 (TKAN…TPAS) and 127–152 (QSQF…GNTF). Residues 153-165 (TDSSSADSDMTST) show a composition bias toward low complexity. The interval 299–401 (NNGIHINNKV…NSKSKTARAH (103 aa)) is RNA-binding. The span at 402–418 (NVSTSNNSPSTDNDSIS) shows a compositional bias: low complexity. S416 is modified (phosphoserine). Residue D461 is the For protease activity; shared with dimeric partner of the active site. Residues 583–640 (NVHTSESTRKYPYPFIHRMLAHANAQTIRYSLKNNTITYFNESDVDWSSAIDYQCPDC) are integrase-type zinc finger-like. Positions 660 to 835 (NSYEPFQYLH…AGLDISTLLP (176 aa)) constitute an Integrase catalytic domain. Residues D671 and D736 each coordinate Mg(2+). 3 disordered regions span residues 956–1087 (SKAV…ETEK), 1092–1111 (RSPS…NIVP), and 1130–1187 (DLPL…DNET). Residues 960–969 (SPTDSTPPST) are compositionally biased toward low complexity. The span at 1005–1015 (STPQISNIEST) shows a compositional bias: polar residues. Positions 1038 to 1053 (ESSHASKSKDFRHSDS) are enriched in basic and acidic residues. Polar residues-rich tracts occupy residues 1054 to 1082 (YSEN…QISD) and 1101 to 1111 (PENNSSHNIVP). Positions 1178–1212 (KKRSLEDNETEIKVSRDTWNTKNMRSLEPPRSKKR) match the Bipartite nuclear localization signal motif. The region spanning 1338 to 1476 (NNYYITQLDI…DILGLEIKYQ (139 aa)) is the Reverse transcriptase Ty1/copia-type domain. Mg(2+) is bound by residues D1346, D1427, D1428, D1610, E1652, and D1685. In terms of domain architecture, RNase H Ty1/copia-type spans 1610-1752 (DASYGNQPYY…IKTFKLLTNK (143 aa)).

The capsid protein forms a homotrimer, from which the VLPs are assembled. The protease is a homodimer, whose active site consists of two apposed aspartic acid residues. In terms of processing, initially, virus-like particles (VLPs) are composed of the structural unprocessed proteins Gag and Gag-Pol, and also contain the host initiator methionine tRNA (tRNA(i)-Met) which serves as a primer for minus-strand DNA synthesis, and a dimer of genomic Ty RNA. Processing of the polyproteins occurs within the particle and proceeds by an ordered pathway, called maturation. First, the protease (PR) is released by autocatalytic cleavage of the Gag-Pol polyprotein yielding capsid protein p45 and a Pol-p154 precursor protein. This cleavage is a prerequisite for subsequent processing of Pol-p154 at the remaining sites to release the mature structural and catalytic proteins. Maturation takes place prior to the RT reaction and is required to produce transposition-competent VLPs.

Its subcellular location is the cytoplasm. It localises to the nucleus. The catalysed reaction is DNA(n) + a 2'-deoxyribonucleoside 5'-triphosphate = DNA(n+1) + diphosphate. The enzyme catalyses Endonucleolytic cleavage to 5'-phosphomonoester.. Its function is as follows. Capsid protein (CA) is the structural component of the virus-like particle (VLP), forming the shell that encapsulates the retrotransposons dimeric RNA genome. The particles are assembled from trimer-clustered units and there are holes in the capsid shells that allow for the diffusion of macromolecules. CA also has nucleocapsid-like chaperone activity, promoting primer tRNA(i)-Met annealing to the multipartite primer-binding site (PBS), dimerization of Ty1 RNA and initiation of reverse transcription. The aspartyl protease (PR) mediates the proteolytic cleavages of the Gag and Gag-Pol polyproteins after assembly of the VLP. In terms of biological role, reverse transcriptase/ribonuclease H (RT) is a multifunctional enzyme that catalyzes the conversion of the retro-elements RNA genome into dsDNA within the VLP. The enzyme displays a DNA polymerase activity that can copy either DNA or RNA templates, and a ribonuclease H (RNase H) activity that cleaves the RNA strand of RNA-DNA heteroduplexes during plus-strand synthesis and hydrolyzes RNA primers. The conversion leads to a linear dsDNA copy of the retrotransposon that includes long terminal repeats (LTRs) at both ends. Functionally, integrase (IN) targets the VLP to the nucleus, where a subparticle preintegration complex (PIC) containing at least integrase and the newly synthesized dsDNA copy of the retrotransposon must transit the nuclear membrane. Once in the nucleus, integrase performs the integration of the dsDNA into the host genome. The sequence is that of Transposon Ty1-GR2 Gag-Pol polyprotein (TY1B-GR2) from Saccharomyces cerevisiae (strain ATCC 204508 / S288c) (Baker's yeast).